A 332-amino-acid chain; its full sequence is Trace amine-associated receptor 1 (332 aa).

Residues 1-23 are Extracellular-facing; that stretch reads MHLCHAITNISHRNSDWSREVQA. N-linked (GlcNAc...) asparagine glycosylation occurs at asparagine 9. Residues 24 to 48 traverse the membrane as a helical segment; that stretch reads SLYSLMSLIILATLVGNLIVIISIS. The Cytoplasmic portion of the chain corresponds to 49-58; the sequence is HFKQLHTPTN. The chain crosses the membrane as a helical span at residues 59–80; that stretch reads WLLHSMAIVDFLLGCLIMPCSM. Residues 81–95 are Extracellular-facing; sequence VRTVERCWYFGEILC. Cysteine 95 and cysteine 181 are joined by a disulfide. A helical membrane pass occupies residues 96–118; sequence KVHTSTDIMLSSASIFHLAFISI. 2-phenylethylamine is bound at residue aspartate 102. The Cytoplasmic portion of the chain corresponds to 119 to 138; it reads DRYCAVCDPLRYKAKINIST. Residues 139–160 form a helical membrane-spanning segment; the sequence is ILVMILVSWSLPAVYAFGMIFL. At 161–187 the chain is on the extracellular side; sequence ELNLKGVEELYRSQVSDLGGCSPFFSK. An extracellular Loop 2 (ECL2) region spans residues 174-185; it reads QVSDLGGCSPFF. The helical transmembrane segment at 188-210 threads the bilayer; sequence VSGVLAFMTSFYIPGSVMLFVYY. Over 211–246 the chain is Cytoplasmic; the sequence is RIYFIAKGQARSINRTNVQVGLEGKSQAPQSKETKA. A helical transmembrane segment spans residues 247-270; sequence AKTLGIMVGVFLVCWCPFFLCTVL. Residues 271-283 are Extracellular-facing; sequence DPFLGYVIPPSLN. Residues 284-304 form a helical membrane-spanning segment; it reads DALYWFGYLNSALNPMVYAFF. Topologically, residues 305 to 332 are cytoplasmic; that stretch reads YPWFRRALKMVLLGKIFQKDSSRSKLFL.

The protein belongs to the G-protein coupled receptor 1 family. Widely distributed throughout the brain. Strongly expressed in the mitral cell layer of the olfactory bulb, piriform cortex, the arcuate, motor, and mesencephalic trigeminal nuclei, lateral reticular and hypoglossal nuclei, cerebellar Purkinje cells, and ventral horn of the spinal cord. Moderately expressed in the frontal, entorhinal, and agranular cortices, the ventral pallidum, thalamus, hippocampus, several hypothalamic nuclei, ambiguus, dorsal raphe, and gigantocellular reticular nuclei. Weakly expressed in the septum, basal ganglia, amygdala, myelencephalon, and spinal cord dorsal horn. Particularly interesting is the moderate expression in several monoaminergic cell groups, namely the dorsal raphe, the locus coeruleus, and the ventral tegmental area.

It is found in the endomembrane system. It localises to the endoplasmic reticulum membrane. Its subcellular location is the cell membrane. Its activity is regulated as follows. Activated by SEP-363856 small molecule: IHCH-7179 acts both as an agonist activator for HTR1A and TAAR1. Functionally, intracellular G-protein coupled receptor for trace amines, which recognizes endogenous amine-containing metabolites such as beta-phenylethylamine (beta-PEA), 3-iodothyronamine (T1AM), isoamylamine (IAA), cadaverine (CAD), cyclohexylamine (CHA), p-tyramine (p-TYR), trimethylamine (TMA), octopamine and tryptamine. Also functions as a receptor for various drugs and psychoactive substances, such as amphetamine and methamphetamine. Unresponsive to classical biogenic amines, such as epinephrine and histamine and only partially activated by dopamine and serotonin. Expressed in both the central and peripheral nervous system: TAAR1 activation regulates the activity of several neurotransmitter signaling pathways by (1) decreasing the basal firing rates of the neurons involved and by (2) lowering the sensitivity of receptors to neurotransmitters. Ligand binding causes a conformation change that triggers signaling via guanine nucleotide-binding proteins (G proteins) and modulates the activity of downstream effectors. TAAR1 is coupled with different G(i)/G(o)-, G(s)- or G(q)/G(11) classes of G alpha proteins depending on the ligand. CAD-binding is coupled to G(i)/G(o) G alpha proteins and mediates inhibition of adenylate cyclase activity. T1AM- or beta-PEA-binding is coupled to G(s) G alpha proteins and mediates activation of adenylate cyclase activity. CHA- or IAA-binding is coupled to G(q)/G(11) G alpha proteins and activates phospholipase C-beta, releasing diacylglycerol (DAG) and inositol 1,4,5-trisphosphate (IP3) second messengers. TMA-binding is coupled with all three G(i)/G(o)-, G(s)- or G(q)/G(11) G alpha protein subtypes. In Mus musculus (Mouse), this protein is Trace amine-associated receptor 1.